A 440-amino-acid chain; its full sequence is Histidinol dehydrogenase homolog 2 (440 aa).

Histidine 265 contributes to the Zn(2+) binding site. Residues glutamate 333 and histidine 334 each act as proton acceptor in the active site. Histidine 426 serves as a coordination point for Zn(2+).

It belongs to the histidinol dehydrogenase family. It depends on Zn(2+) as a cofactor.

This chain is Histidinol dehydrogenase homolog 2, found in Mesorhizobium japonicum (strain LMG 29417 / CECT 9101 / MAFF 303099) (Mesorhizobium loti (strain MAFF 303099)).